Reading from the N-terminus, the 520-residue chain is Cytochrome P450 monooxygenase TRI4 (520 aa).

The chain crosses the membrane as a helical span at residues 10-30 (LVNIPISHAVGVVAASTVIYF). The N-linked (GlcNAc...) asparagine glycan is linked to asparagine 447. Cysteine 455 is a binding site for heme.

Belongs to the cytochrome P450 family. Heme serves as cofactor.

Its subcellular location is the membrane. Its pathway is sesquiterpene biosynthesis; trichothecene biosynthesis. Its function is as follows. Cytochrome P450 monooxygenase; part of the core gene cluster that mediates the biosynthesis of trichothecenes, a very large family of chemically related bicyclic sesquiterpene compounds acting as mycotoxins, including T2-toxin. The biosynthesis of trichothecenes begins with the cyclization of farnesyl diphosphate to trichodiene and is catalyzed by the trichodiene synthase TRI5. Trichodiene undergoes a series of oxygenations catalyzed by the cytochrome P450 monooxygenase TRI4. TRI4 controls the addition of four oxygens at C-2, C-3, C-11, and the C-12, C-13-epoxide to form the intermediate isotrichotriol. Isotrichotriol then undergoes a non-enzymatic isomerization and cyclization to form isotrichodermol. During this process, the oxygen at the C-2 position becomes the pyran ring oxygen and the hydroxyl group at C-11 is lost. More complex type A trichothecenes are built by modifying isotrichodermol through a series of paired hydroxylation and acetylation or acylation steps. Isotrichodermol is converted to isotrichodermin by the acetyltransferase TRI101. TRI101 encodes a C-3 transacetylase that acts as a self-protection or resistance factor during biosynthesis and that the presence of a free C-3 hydroxyl group is a key component of Fusarium trichothecene phytotoxicity. A second hydroxyl group is added to C-15 by the trichothecene C-15 hydroxylase TRI11, producing 15-decalonectrin, which is then acetylated by TRI3, producing calonectrin. A third hydroxyl group is added at C-4 by the cytochrome P450 monooxygenase TRI13, converting calonectrin to 3,15-diacetoxyspirpenol, which is subsequently acetylated by the acetyltransferase TRI7. A fourth hydroxyl group is added to C-8 by the cytochrome P450 monooxygenase TRI1, followed by the addition of an isovaleryl moiety by TRI16. Finally, the acetyl group is removed from the C-3 position by the trichothecene C-3 esterase TRI8 to produce T-2 toxin. The protein is Cytochrome P450 monooxygenase TRI4 of Fusarium sporotrichioides.